We begin with the raw amino-acid sequence, 894 residues long: Protein translocase subunit SecA (894 aa).

ATP is bound by residues Gln-87, Gly-105–Thr-109, and Asp-512. A disordered region spans residues Phe-857 to Lys-894. Cys-880, Cys-882, Cys-891, and Cys-892 together coordinate Zn(2+).

Belongs to the SecA family. Monomer and homodimer. Part of the essential Sec protein translocation apparatus which comprises SecA, SecYEG and auxiliary proteins SecDF-YajC and YidC. Requires Zn(2+) as cofactor.

The protein resides in the cell inner membrane. It is found in the cytoplasm. The catalysed reaction is ATP + H2O + cellular proteinSide 1 = ADP + phosphate + cellular proteinSide 2.. In terms of biological role, part of the Sec protein translocase complex. Interacts with the SecYEG preprotein conducting channel. Has a central role in coupling the hydrolysis of ATP to the transfer of proteins into and across the cell membrane, serving as an ATP-driven molecular motor driving the stepwise translocation of polypeptide chains across the membrane. This chain is Protein translocase subunit SecA, found in Geotalea uraniireducens (strain Rf4) (Geobacter uraniireducens).